The sequence spans 38 residues: Large ribosomal subunit protein bL36 (38 aa).

The protein belongs to the bacterial ribosomal protein bL36 family.

The protein is Large ribosomal subunit protein bL36 of Saccharophagus degradans (strain 2-40 / ATCC 43961 / DSM 17024).